The sequence spans 183 residues: Holliday junction branch migration complex subunit RuvA (183 aa).

Residues 1–64 (MVVGIEGIIT…EDSNKFYGFL (64 aa)) form a domain I region. Residues 65–139 (DKDEQKMFEM…DTRTKLENVS (75 aa)) form a domain II region. Residue S139 is a region of interest, flexible linker. The segment at 139 to 183 (SDDKSEALAALLTLGFKQEKIISVLASAQATGTSELIKEALKKLR) is domain III.

This sequence belongs to the RuvA family. As to quaternary structure, homotetramer. Forms an RuvA(8)-RuvB(12)-Holliday junction (HJ) complex. HJ DNA is sandwiched between 2 RuvA tetramers; dsDNA enters through RuvA and exits via RuvB. An RuvB hexamer assembles on each DNA strand where it exits the tetramer. Each RuvB hexamer is contacted by two RuvA subunits (via domain III) on 2 adjacent RuvB subunits; this complex drives branch migration. In the full resolvosome a probable DNA-RuvA(4)-RuvB(12)-RuvC(2) complex forms which resolves the HJ.

The protein resides in the cytoplasm. In terms of biological role, the RuvA-RuvB-RuvC complex processes Holliday junction (HJ) DNA during genetic recombination and DNA repair, while the RuvA-RuvB complex plays an important role in the rescue of blocked DNA replication forks via replication fork reversal (RFR). RuvA specifically binds to HJ cruciform DNA, conferring on it an open structure. The RuvB hexamer acts as an ATP-dependent pump, pulling dsDNA into and through the RuvAB complex. HJ branch migration allows RuvC to scan DNA until it finds its consensus sequence, where it cleaves and resolves the cruciform DNA. This is Holliday junction branch migration complex subunit RuvA from Campylobacter jejuni subsp. doylei (strain ATCC BAA-1458 / RM4099 / 269.97).